Here is a 516-residue protein sequence, read N- to C-terminus: 4-hydroxybenzoate brominase (decarboxylating) (516 aa).

Residues Ser-13, Glu-32, Val-40, Phe-41, His-51, Val-102, and Gln-365 each contribute to the FAD site.

Belongs to the FMO family. FAD is required as a cofactor.

The catalysed reaction is 2 bromide + 4-hydroxybenzoate + 2 NADPH + 2 O2 + 5 H(+) = 2,4-dibromophenol + CO2 + 2 NADP(+) + 4 H2O. The enzyme catalyses bromide + 4-hydroxybenzoate + NADPH + O2 + 2 H(+) = 3-bromo-4-hydroxybenzoate + NADP(+) + 2 H2O. It catalyses the reaction 3-bromo-4-hydroxybenzoate + bromide + NADPH + O2 + 3 H(+) = 2,4-dibromophenol + CO2 + NADP(+) + 2 H2O. It carries out the reaction 3,4-dihydroxybenzoate + 2 bromide + 2 NADPH + 2 O2 + 5 H(+) = 3,5-dibromobenzene-1,2-diol + CO2 + 2 NADP(+) + 4 H2O. The catalysed reaction is 3,4-dihydroxybenzoate + bromide + NADPH + O2 + 2 H(+) = 3-bromo-4,5-dihydroxybenzoate + NADP(+) + 2 H2O. The enzyme catalyses 3-bromo-4,5-dihydroxybenzoate + bromide + NADPH + O2 + 3 H(+) = 3,5-dibromobenzene-1,2-diol + CO2 + NADP(+) + 2 H2O. Brominase involved in the biosynthesis of polybrominated aromatic organic compounds. Catalyzes the bromination of 4-hydroxybenzoate (4-HBA) to 3-bromo-4-hydroxybenzoate, followed by bromination and decarboxylation of 3-bromo-4-hydroxybenzoate to 2,4-dibromophenol. Can also use 3,4-dihydroxybenzoate, with lower efficiency, forming 3-bromo-4,5-dihydroxybenzoate and 3,5-dibromobenzene-1,2-diol. This is 4-hydroxybenzoate brominase (decarboxylating) from Marinomonas mediterranea (strain ATCC 700492 / JCM 21426 / NBRC 103028 / MMB-1).